A 217-amino-acid polypeptide reads, in one-letter code: 3-demethoxyubiquinol 3-hydroxylase (217 aa).

The Fe cation site is built by Glu66, Glu96, His99, Glu148, Glu180, and His183.

The protein belongs to the COQ7 family. The cofactor is Fe cation.

It is found in the cell membrane. The enzyme catalyses a 5-methoxy-2-methyl-3-(all-trans-polyprenyl)benzene-1,4-diol + AH2 + O2 = a 3-demethylubiquinol + A + H2O. It functions in the pathway cofactor biosynthesis; ubiquinone biosynthesis. Functionally, catalyzes the hydroxylation of 2-nonaprenyl-3-methyl-6-methoxy-1,4-benzoquinol during ubiquinone biosynthesis. In Xylella fastidiosa (strain 9a5c), this protein is 3-demethoxyubiquinol 3-hydroxylase.